The primary structure comprises 257 residues: Global transcriptional regulator CodY (257 aa).

The tract at residues 1-155 (MSLLSKTREL…AATVLGMEIL (155 aa)) is GAF domain. The segment at residues 203–222 (ASKVADRVGITRSVIVNALR) is a DNA-binding region (H-T-H motif).

Belongs to the CodY family.

The protein resides in the cytoplasm. In terms of biological role, DNA-binding global transcriptional regulator which is involved in the adaptive response to starvation and acts by directly or indirectly controlling the expression of numerous genes in response to nutrient availability. During rapid exponential growth, CodY is highly active and represses genes whose products allow adaptation to nutrient depletion. The polypeptide is Global transcriptional regulator CodY (Staphylococcus carnosus (strain TM300)).